A 295-amino-acid polypeptide reads, in one-letter code: Ribosomal RNA small subunit methyltransferase A (295 aa).

The S-adenosyl-L-methionine site is built by Asn-33, Val-35, Gly-60, Glu-81, Asp-111, and Asn-129.

Belongs to the class I-like SAM-binding methyltransferase superfamily. rRNA adenine N(6)-methyltransferase family. RsmA subfamily.

It is found in the cytoplasm. The catalysed reaction is adenosine(1518)/adenosine(1519) in 16S rRNA + 4 S-adenosyl-L-methionine = N(6)-dimethyladenosine(1518)/N(6)-dimethyladenosine(1519) in 16S rRNA + 4 S-adenosyl-L-homocysteine + 4 H(+). Its function is as follows. Specifically dimethylates two adjacent adenosines (A1518 and A1519) in the loop of a conserved hairpin near the 3'-end of 16S rRNA in the 30S particle. May play a critical role in biogenesis of 30S subunits. This is Ribosomal RNA small subunit methyltransferase A from Corynebacterium diphtheriae (strain ATCC 700971 / NCTC 13129 / Biotype gravis).